A 680-amino-acid polypeptide reads, in one-letter code: SH3 domain-binding protein 1 (680 aa).

Basic residues predominate over residues 1–11 (MMKRQLHRMRQ). Disordered regions lie at residues 1-24 (MMKR…TPET) and 160-184 (SQAA…HTTT). The segment at 1–275 (MMKRQLHRMR…TAAPFSRVYG (275 aa)) is interaction with CGNL1. Positions 81-262 (MAESFKELDP…RDNHSQADHS (182 aa)) constitute a BAR domain. A compositionally biased stretch (polar residues) spans 160–169 (SQAAKNSGSN). 2 positions are modified to phosphoserine: Ser241 and Ser262. Residues 276-469 (VSLRTHLQDL…ALIQNADTLF (194 aa)) form the Rho-GAP domain. The tract at residues 470–680 (PGDINFNVSG…RPRGLISETE (211 aa)) is interaction with CD2AP. Positions 488-680 (EKVSSQQVSE…RPRGLISETE (193 aa)) are disordered. Residues 502–516 (VTVPAPATTPAPTPA) show a composition bias toward pro residues. Phosphoserine is present on Ser535. Polar residues predominate over residues 536 to 546 (PKVSRNPTETA). Residues 561–571 (PARPTMPPPQP) are compositionally biased toward pro residues. Ser582 carries the post-translational modification Phosphoserine. Phosphothreonine is present on Thr592. An SH3-binding motif is present at residues 607–616 (APTMPPPLPP). Over residues 609–621 (TMPPPLPPVPPQP) the composition is skewed to pro residues. Ser632 is subject to Phosphoserine. The segment covering 660 to 671 (HPPPPALPPQPR) has biased composition (pro residues).

As to quaternary structure, interacts with RAC1. Interacts with the exocyst via EXOC4 and EXOC8; required for the localization of both SH3BP1 and the exocyst to the leading edge of migrating cells. Interacts with CD2AP and CGNL1; probably part of a complex at cell junctions. Interacts with CAPZA1; recruits CAPZA1 to forming cell junctions. May interact with AFDN. Interacts with PLXND1; they dissociate upon SEMA3E binding to PLXND1 allowing SH3BP1 to transduce downstream signal through RAC1 inactivation. Interacts with ABL1, GRB2 and SRC (via SH3 domain). Expressed in all tissues examined. Highest levels found in spleen and brain, lowest in heart and liver.

It is found in the cell projection. It localises to the cell junction. The protein localises to the tight junction. Its subcellular location is the adherens junction. The protein resides in the phagocytic cup. It is found in the nucleus. It localises to the cytoplasm. The protein localises to the cytosol. Its function is as follows. GTPase activating protein (GAP) which specifically converts GTP-bound Rho-type GTPases including RAC1 and CDC42 in their inactive GDP-bound form. By specifically inactivating RAC1 at the leading edge of migrating cells, it regulates the spatiotemporal organization of cell protrusions which is important for proper cell migration. Also negatively regulates CDC42 in the process of actin remodeling and the formation of epithelial cell junctions. Through its GAP activity toward RAC1 and/or CDC42 plays a specific role in phagocytosis of large particles. Specifically recruited by a PI3 kinase/PI3K-dependent mechanism to sites of large particles engagement, inactivates RAC1 and/or CDC42 allowing the reorganization of the underlying actin cytoskeleton required for engulfment. It also plays a role in angiogenesis and the process of repulsive guidance as part of a semaphorin-plexin signaling pathway. Following the binding of PLXND1 to extracellular SEMA3E it dissociates from PLXND1 and inactivates RAC1, inducing the intracellular reorganization of the actin cytoskeleton and the collapse of cells. The chain is SH3 domain-binding protein 1 from Mus musculus (Mouse).